A 611-amino-acid chain; its full sequence is Glutamine--fructose-6-phosphate aminotransferase [isomerizing] (611 aa).

The active-site Nucleophile; for GATase activity is the C2. A Glutamine amidotransferase type-2 domain is found at 2-219 (CGIVGGVSKT…DGDVAMLQRQ (218 aa)). SIS domains follow at residues 287–427 (AAAM…APGA) and 460–601 (WAAR…VDRP). The active-site For Fru-6P isomerization activity is the K606.

In terms of assembly, homodimer.

The protein resides in the cytoplasm. It carries out the reaction D-fructose 6-phosphate + L-glutamine = D-glucosamine 6-phosphate + L-glutamate. Its function is as follows. Catalyzes the first step in hexosamine metabolism, converting fructose-6P into glucosamine-6P using glutamine as a nitrogen source. This chain is Glutamine--fructose-6-phosphate aminotransferase [isomerizing], found in Acidithiobacillus ferridurans.